Consider the following 347-residue polypeptide: A-type ATP synthase subunit C (347 aa).

Belongs to the V-ATPase V0D/AC39 subunit family. As to quaternary structure, has multiple subunits with at least A(3), B(3), C, D, E, F, H, I and proteolipid K(x).

It is found in the cell membrane. Its function is as follows. Component of the A-type ATP synthase that produces ATP from ADP in the presence of a proton gradient across the membrane. This is A-type ATP synthase subunit C from Haloquadratum walsbyi (strain DSM 16790 / HBSQ001).